The primary structure comprises 1262 residues: Tau-tubulin kinase homolog Asator (1262 aa).

Positions 13 to 35 are disordered; the sequence is NASAPDDGNQSCQPSSKQDQYLS. Positions 20–35 are enriched in polar residues; the sequence is GNQSCQPSSKQDQYLS. Residues 173–436 form the Protein kinase domain; it reads WKVVRKIGGG…MLIGLFERCM (264 aa). ATP contacts are provided by residues 179–187 and Lys-202; that span reads IGGGGFGEI. Asp-293 functions as the Proton acceptor in the catalytic mechanism. Disordered regions lie at residues 662 to 724, 755 to 792, and 984 to 1003; these read TVTN…TSNA, RSAT…ARSS, and KDSA…SRHR. A compositionally biased stretch (basic and acidic residues) spans 667 to 679; that stretch reads KTSEVNRSTEEQK. The segment covering 755 to 776 has biased composition (polar residues); the sequence is RSATSTNLRPSSSASQRINSGS.

Belongs to the protein kinase superfamily. CK1 Ser/Thr protein kinase family. In terms of assembly, interacts with Mgtor. The cofactor is Mg(2+). Detected in larval brain.

The protein localises to the cytoplasm. It is found in the cytoskeleton. Its subcellular location is the spindle. It catalyses the reaction L-seryl-[protein] + ATP = O-phospho-L-seryl-[protein] + ADP + H(+). The enzyme catalyses L-threonyl-[protein] + ATP = O-phospho-L-threonyl-[protein] + ADP + H(+). Probable serine/threonine protein kinase. This is Tau-tubulin kinase homolog Asator from Drosophila melanogaster (Fruit fly).